We begin with the raw amino-acid sequence, 35 residues long: Antimicrobial peptide 3 (35 aa).

Residues 4–35 (GGECGGRFGGCAGGQCCSRFGFCGSGPKYCAH) form the Chitin-binding type-1 domain. Intrachain disulfides connect Cys7-Cys20, Cys14-Cys26, and Cys19-Cys33.

Post-translationally, contains 3 disulfide bonds. As to expression, expressed in leaf, flower, stem and seed with highest expression in leaf (at protein level).

Functionally, has antifungal activity against A.niger (IC(50)=5.4 uM), B.sorokiniana (IC(50)=2.0 uM), B.cinerea (IC(50)=1.6 uM), F.solani (IC(50)=3.7 uM) and A.alternata (IC(50)=5.0 uM). Binds chitin in vitro. Has no antibacterial activity at concentrations up to 10 uM. The chain is Antimicrobial peptide 3 from Stellaria media (Common chickweed).